The primary structure comprises 155 residues: MANVELQTSLGKILIELYTEHAPKTCQNFYTLAKEGYYDGVIFHRVIPDFVIQGGDPTGTGRGGTSIYGDKFDDEIHSDLHHTGAGILSMANAGPNTNSSQFFITLAPTPWLDGKHTIFGRVVSGLSVCKRMGLIRTDSSDRPIEPLKIIKAVAL.

Residues M1–A154 form the PPIase cyclophilin-type domain.

The protein belongs to the cyclophilin-type PPIase family. PPIL1 subfamily. As to quaternary structure, interacts with cwf13/snw1.

The enzyme catalyses [protein]-peptidylproline (omega=180) = [protein]-peptidylproline (omega=0). Its function is as follows. PPIases accelerate the folding of proteins. It catalyzes the cis-trans isomerization of proline imidic peptide bonds in oligopeptides. The chain is Peptidyl-prolyl cis-trans isomerase ppi1 (ppi1) from Schizosaccharomyces pombe (strain 972 / ATCC 24843) (Fission yeast).